The primary structure comprises 227 residues: Endolytic peptidoglycan transglycosylase RlpA (227 aa).

The signal sequence occupies residues 1 to 21 (MMNHKFVLLILLIFYCFFLSG). Cys22 carries the N-palmitoyl cysteine lipid modification. The S-diacylglycerol cysteine moiety is linked to residue Cys22.

Belongs to the RlpA family.

It is found in the cell membrane. Lytic transglycosylase with a strong preference for naked glycan strands that lack stem peptides. In Rickettsia bellii (strain RML369-C), this protein is Endolytic peptidoglycan transglycosylase RlpA.